Consider the following 443-residue polypeptide: ATP-dependent RNA helicase SUB2 (443 aa).

The Q motif motif lies at 60-88; sequence TGFRDFLLKPELLRAITDCGFEHPSEVQQ. The region spanning 91-266 is the Helicase ATP-binding domain; sequence IPTAILKVDV…KKFMRNPLEV (176 aa). 104 to 111 lines the ATP pocket; sequence AKSGLGKT. Residues 213 to 216 carry the DEAD box motif; sequence DECD. Residues 294–439 form the Helicase C-terminal domain; sequence KLNELLDNLE…EYPEEGVDAS (146 aa).

Belongs to the DEAD box helicase family. DECD subfamily.

Its subcellular location is the nucleus. It carries out the reaction ATP + H2O = ADP + phosphate + H(+). ATP-binding RNA helicase involved in transcription elongation and required for the export of mRNA out of the nucleus. SUB2 also plays a role in pre-mRNA splicing and spliceosome assembly. May be involved in rDNA and telomeric silencing, and maintenance of genome integrity. The sequence is that of ATP-dependent RNA helicase SUB2 (SUB2) from Coccidioides immitis (strain RS) (Valley fever fungus).